A 229-amino-acid polypeptide reads, in one-letter code: Cytidylate kinase (229 aa).

Position 10 to 18 (10 to 18 (GHSSSGKST)) interacts with ATP.

It belongs to the cytidylate kinase family. Type 1 subfamily.

It is found in the cytoplasm. It carries out the reaction CMP + ATP = CDP + ADP. The enzyme catalyses dCMP + ATP = dCDP + ADP. In Parabacteroides distasonis (strain ATCC 8503 / DSM 20701 / CIP 104284 / JCM 5825 / NCTC 11152), this protein is Cytidylate kinase.